The primary structure comprises 230 residues: uncharacterized protein (230 aa).

The protein belongs to the transferase hexapeptide repeat family.

This is an uncharacterized protein from Escherichia coli (strain K12).